Here is a 79-residue protein sequence, read N- to C-terminus: Moronecidin (79 aa).

Residues 1 to 22 form the signal peptide; sequence MKCATLSLVLSMVVLMAEPGDA. The residue at position 44 (Gly-44) is a Glycine amide. The tract at residues 45–68 is disordered; sequence GKAEQDQQDQQYQQDQQDQQAQQY. A propeptide spanning residues 47 to 79 is cleaved from the precursor; that stretch reads AEQDQQDQQYQQDQQDQQAQQYQRFNRERAAFD. Over residues 52–68 the composition is skewed to low complexity; sequence QDQQYQQDQQDQQAQQY.

Expressed in gill, skin, intestine, spleen, anterior kidney, and blood cells.

It localises to the secreted. Antimicrobial peptide with broad-spectrum activity against Gram-positive and Gram-negative bacteria as well as against a variety of fungi. Rapidly inactivates both channel catfish herpesvirus (ED(50)=4 uM) and frog virus 3 (ED(50)=13 uM) over a wide temperature range. Seems to disrupt the membranes by adopting an alpha helical conformation. This chain is Moronecidin, found in Morone chrysops (White bass).